The following is a 315-amino-acid chain: tRNA pseudouridine synthase B (315 aa).

Residue aspartate 54 is the Nucleophile of the active site.

The protein belongs to the pseudouridine synthase TruB family. Type 1 subfamily.

The catalysed reaction is uridine(55) in tRNA = pseudouridine(55) in tRNA. In terms of biological role, responsible for synthesis of pseudouridine from uracil-55 in the psi GC loop of transfer RNAs. This chain is tRNA pseudouridine synthase B, found in Cupriavidus pinatubonensis (strain JMP 134 / LMG 1197) (Cupriavidus necator (strain JMP 134)).